The sequence spans 358 residues: Fructose-bisphosphate aldolase (358 aa).

Ser-61 contacts D-glyceraldehyde 3-phosphate. Asp-108 serves as the catalytic Proton donor. Zn(2+)-binding residues include His-109, Asp-143, Glu-173, and His-225. Gly-226 contributes to the dihydroxyacetone phosphate binding site. Position 264 (His-264) interacts with Zn(2+). Dihydroxyacetone phosphate is bound by residues 265–267 and 286–289; these read GGS and NIDT. Phosphothreonine is present on residues Thr-289, Thr-312, Thr-340, and Thr-342.

The protein belongs to the class II fructose-bisphosphate aldolase family. In terms of assembly, homodimer. Zn(2+) is required as a cofactor.

The catalysed reaction is beta-D-fructose 1,6-bisphosphate = D-glyceraldehyde 3-phosphate + dihydroxyacetone phosphate. The protein operates within carbohydrate degradation; glycolysis; D-glyceraldehyde 3-phosphate and glycerone phosphate from D-glucose: step 4/4. Catalyzes the aldol condensation of dihydroxyacetone phosphate (DHAP or glycerone-phosphate) with glyceraldehyde 3-phosphate (G3P) to form fructose 1,6-bisphosphate (FBP) in gluconeogenesis and the reverse reaction in glycolysis. The sequence is that of Fructose-bisphosphate aldolase (fba1) from Schizosaccharomyces pombe (strain 972 / ATCC 24843) (Fission yeast).